A 365-amino-acid chain; its full sequence is tRNA (guanine(6)-N2)-methyltransferase (365 aa).

Positions 69-182 (NENSRLLHRV…KDVFFLGIDT (114 aa)) constitute a THUMP domain. Residues 198-202 (HPAHL), 228-230 (SGT), Glu-248, 276-277 (DA), and Asn-293 each bind S-adenosyl-L-methionine.

This sequence belongs to the methyltransferase superfamily. Monomer in solution.

The protein localises to the cytoplasm. The enzyme catalyses guanosine(6) in tRNA + S-adenosyl-L-methionine = N(2)-methylguanosine(6) in tRNA + S-adenosyl-L-homocysteine + H(+). In terms of biological role, S-adenosyl-L-methionine-dependent methyltransferase that catalyzes the methylation of the guanosine nucleotide at position 6 (m2G6) in tRNA(Phe). This chain is tRNA (guanine(6)-N2)-methyltransferase, found in Pyrococcus furiosus (strain ATCC 43587 / DSM 3638 / JCM 8422 / Vc1).